The primary structure comprises 340 residues: Holliday junction branch migration complex subunit RuvB (340 aa).

The interval 1-183 (MKRDDLVSPE…FGISFRLDYY (183 aa)) is large ATPase domain (RuvB-L). ATP is bound by residues L22, R23, G64, K67, T68, T69, 130–132 (EDF), R173, Y183, and R220. T68 contacts Mg(2+). Residues 184–254 (AVEELTKIIN…VAVHALEMLE (71 aa)) are small ATPAse domain (RuvB-S). A head domain (RuvB-H) region spans residues 257–340 (DRGFDQMDRS…KFEVGQKELF (84 aa)). K312 and R317 together coordinate DNA.

This sequence belongs to the RuvB family. As to quaternary structure, homohexamer. Forms an RuvA(8)-RuvB(12)-Holliday junction (HJ) complex. HJ DNA is sandwiched between 2 RuvA tetramers; dsDNA enters through RuvA and exits via RuvB. An RuvB hexamer assembles on each DNA strand where it exits the tetramer. Each RuvB hexamer is contacted by two RuvA subunits (via domain III) on 2 adjacent RuvB subunits; this complex drives branch migration. In the full resolvosome a probable DNA-RuvA(4)-RuvB(12)-RuvC(2) complex forms which resolves the HJ.

It localises to the cytoplasm. The enzyme catalyses ATP + H2O = ADP + phosphate + H(+). Its function is as follows. The RuvA-RuvB-RuvC complex processes Holliday junction (HJ) DNA during genetic recombination and DNA repair, while the RuvA-RuvB complex plays an important role in the rescue of blocked DNA replication forks via replication fork reversal (RFR). RuvA specifically binds to HJ cruciform DNA, conferring on it an open structure. The RuvB hexamer acts as an ATP-dependent pump, pulling dsDNA into and through the RuvAB complex. RuvB forms 2 homohexamers on either side of HJ DNA bound by 1 or 2 RuvA tetramers; 4 subunits per hexamer contact DNA at a time. Coordinated motions by a converter formed by DNA-disengaged RuvB subunits stimulates ATP hydrolysis and nucleotide exchange. Immobilization of the converter enables RuvB to convert the ATP-contained energy into a lever motion, pulling 2 nucleotides of DNA out of the RuvA tetramer per ATP hydrolyzed, thus driving DNA branch migration. The RuvB motors rotate together with the DNA substrate, which together with the progressing nucleotide cycle form the mechanistic basis for DNA recombination by continuous HJ branch migration. Branch migration allows RuvC to scan DNA until it finds its consensus sequence, where it cleaves and resolves cruciform DNA. This Syntrophus aciditrophicus (strain SB) protein is Holliday junction branch migration complex subunit RuvB.